The chain runs to 474 residues: Protein anachronism (474 aa).

An N-terminal signal peptide occupies residues M1 to A33. Residues N54, N62, N73, N116, and N144 are each glycosylated (N-linked (GlcNAc...) asparagine). Residues N173–P195 form a disordered region. Residues G183–P195 are compositionally biased toward polar residues. An N-linked (GlcNAc...) asparagine glycan is attached at N342. The span at F359–N372 shows a compositional bias: polar residues. Residues F359–E474 are disordered. Basic residues-rich tracts occupy residues L390–H400 and N437–E474.

As to expression, synthesized in some glial cells and secreted.

The protein resides in the secreted. Functionally, negatively regulates proliferation of neuronal precursor cells, thereby controlling the timing of postembryonic neurogenesis. The sequence is that of Protein anachronism (ana) from Drosophila melanogaster (Fruit fly).